The primary structure comprises 503 residues: uncharacterized protein (503 aa).

12 helical membrane-spanning segments follow: residues 20–40 (FIAF…VLTM), 43–63 (LGPF…GVML), 106–126 (VSLT…LSFA), 138–158 (LIGL…ISLF), 166–186 (AILF…ILGI), 215–235 (VIST…LTAI), 249–269 (LLMF…ISGI), 301–321 (YLGI…SLAS), 359–379 (VWAS…VPFL), 405–425 (LAVL…FMIL), 443–463 (GVSF…ITAW), and 468–488 (TFKL…FIHS).

To M.genitalium MG225.

The protein localises to the cell membrane. This is an uncharacterized protein from Mycoplasma pneumoniae (strain ATCC 29342 / M129 / Subtype 1) (Mycoplasmoides pneumoniae).